Reading from the N-terminus, the 338-residue chain is Holliday junction branch migration complex subunit RuvB (338 aa).

The segment at 4 to 184 (ADRLMSAAAV…FGIVQRLEFY (181 aa)) is large ATPase domain (RuvB-L). ATP-binding positions include Ile23, Arg24, Gly65, Lys68, Thr69, Thr70, 131 to 133 (EDY), Arg174, Tyr184, and Arg221. A Mg(2+)-binding site is contributed by Thr69. The segment at 185-255 (QTGDLQHIVS…VAVSALNMLN (71 aa)) is small ATPAse domain (RuvB-S). The interval 258 to 338 (TEGFDFMDRK…GLEEHGGDPE (81 aa)) is head domain (RuvB-H). The DNA site is built by Arg294, Arg313, and Arg318.

This sequence belongs to the RuvB family. In terms of assembly, homohexamer. Forms an RuvA(8)-RuvB(12)-Holliday junction (HJ) complex. HJ DNA is sandwiched between 2 RuvA tetramers; dsDNA enters through RuvA and exits via RuvB. An RuvB hexamer assembles on each DNA strand where it exits the tetramer. Each RuvB hexamer is contacted by two RuvA subunits (via domain III) on 2 adjacent RuvB subunits; this complex drives branch migration. In the full resolvosome a probable DNA-RuvA(4)-RuvB(12)-RuvC(2) complex forms which resolves the HJ.

The protein localises to the cytoplasm. It carries out the reaction ATP + H2O = ADP + phosphate + H(+). Functionally, the RuvA-RuvB-RuvC complex processes Holliday junction (HJ) DNA during genetic recombination and DNA repair, while the RuvA-RuvB complex plays an important role in the rescue of blocked DNA replication forks via replication fork reversal (RFR). RuvA specifically binds to HJ cruciform DNA, conferring on it an open structure. The RuvB hexamer acts as an ATP-dependent pump, pulling dsDNA into and through the RuvAB complex. RuvB forms 2 homohexamers on either side of HJ DNA bound by 1 or 2 RuvA tetramers; 4 subunits per hexamer contact DNA at a time. Coordinated motions by a converter formed by DNA-disengaged RuvB subunits stimulates ATP hydrolysis and nucleotide exchange. Immobilization of the converter enables RuvB to convert the ATP-contained energy into a lever motion, pulling 2 nucleotides of DNA out of the RuvA tetramer per ATP hydrolyzed, thus driving DNA branch migration. The RuvB motors rotate together with the DNA substrate, which together with the progressing nucleotide cycle form the mechanistic basis for DNA recombination by continuous HJ branch migration. Branch migration allows RuvC to scan DNA until it finds its consensus sequence, where it cleaves and resolves cruciform DNA. The polypeptide is Holliday junction branch migration complex subunit RuvB (Sodalis glossinidius (strain morsitans)).